Reading from the N-terminus, the 492-residue chain is Virion host shutoff protein (492 aa).

Disordered stretches follow at residues 110-130 (EEAS…SRPS), 143-165 (FAPG…GAPS), 288-307 (SQAR…LESM), and 334-369 (EDDY…PPEL). Positions 144-165 (APGDRGTRAAGPGPAAPSGAPS) are enriched in low complexity.

It belongs to the herpesviridae VHS protein family. As to quaternary structure, interacts with human EIF4H, EIF4A1 and EIF4A2; interaction with eIF4AI and EIF4A2 presumably allows Vhs protein to associate with the eIF4F cap-binding complex.

The protein localises to the virion. Functionally, minor structural protein that acts as an endoribonuclease during lytic infection. Degrades host mRNAs in the cytoplasm by cutting them at preferred sites, including some in regions of translation initiation. Together with inhibition of host splicing by ICP27, contributes to an overall decrease in host protein synthesis. Also, after the onset of viral transcription, accelerates the turnover of viral mRNA, thereby facilitating the sequential expression of different classes of viral genes. Binds translation initiation factors eIF4H, eIF4AI, and eIF4AII, thereby may interact directly with the translation initiation complex and thus digest specifically mRNAs. Also impedes antigen presentation by major histocompatibility complex class I and class II molecules, inhibits secretion of cytokines that would otherwise recruit lymphocytes and neutrophils cells to the site of infection and blocks the activation of dendritic cells. Impedes the alpha/beta interferon-mediated response to infection. Inhibits the integrated stress response (ISR) in the infected cell, this function requires the endonuclease activity. Stress granule formation is thus inhibited, which allows protein synthesis and viral replication. This is Virion host shutoff protein (UL41) from Human herpesvirus 2 (strain G) (HHV-2).